The primary structure comprises 200 residues: Holliday junction branch migration complex subunit RuvA (200 aa).

Residues 1 to 64 are domain I; sequence MIGQLTGLVG…EDAIQLFGFA (64 aa). The tract at residues 65-143 is domain II; it reads TTDERDWFRL…KMPGGGGTVS (79 aa). The tract at residues 144-148 is flexible linker; sequence APGIV. The domain III stretch occupies residues 149–200; the sequence is SGPSVENDALLALAGLGFRRAEAWPVLSKVLAENENATLDLAIRLSLKDLAR.

The protein belongs to the RuvA family. In terms of assembly, homotetramer. Forms an RuvA(8)-RuvB(12)-Holliday junction (HJ) complex. HJ DNA is sandwiched between 2 RuvA tetramers; dsDNA enters through RuvA and exits via RuvB. An RuvB hexamer assembles on each DNA strand where it exits the tetramer. Each RuvB hexamer is contacted by two RuvA subunits (via domain III) on 2 adjacent RuvB subunits; this complex drives branch migration. In the full resolvosome a probable DNA-RuvA(4)-RuvB(12)-RuvC(2) complex forms which resolves the HJ.

Its subcellular location is the cytoplasm. Its function is as follows. The RuvA-RuvB-RuvC complex processes Holliday junction (HJ) DNA during genetic recombination and DNA repair, while the RuvA-RuvB complex plays an important role in the rescue of blocked DNA replication forks via replication fork reversal (RFR). RuvA specifically binds to HJ cruciform DNA, conferring on it an open structure. The RuvB hexamer acts as an ATP-dependent pump, pulling dsDNA into and through the RuvAB complex. HJ branch migration allows RuvC to scan DNA until it finds its consensus sequence, where it cleaves and resolves the cruciform DNA. The chain is Holliday junction branch migration complex subunit RuvA from Gluconobacter oxydans (strain 621H) (Gluconobacter suboxydans).